The chain runs to 589 residues: Phenylalanine--tRNA ligase beta subunit (589 aa).

The 78-residue stretch at 302–379 folds into the B5 domain; that stretch reads LAYRKEMVRA…IAYGYNNIQM (78 aa). Mg(2+) is bound by residues Asp357, Asp363, Glu366, and Asp367.

Belongs to the phenylalanyl-tRNA synthetase beta subunit family. Type 2 subfamily. Heterotetramer; dimer of two heterodimers formed by FARSA and FARSB. Requires Mg(2+) as cofactor.

The protein resides in the cytoplasm. It carries out the reaction tRNA(Phe) + L-phenylalanine + ATP = L-phenylalanyl-tRNA(Phe) + AMP + diphosphate + H(+). The chain is Phenylalanine--tRNA ligase beta subunit (FARSB) from Homo sapiens (Human).